A 388-amino-acid polypeptide reads, in one-letter code: Succinate--CoA ligase [ADP-forming] subunit beta (388 aa).

Positions 9–244 (KQLFARYGMP…KSQEDEREAQ (236 aa)) constitute an ATP-grasp domain. Residues lysine 46, 53 to 55 (GRG), glutamate 99, threonine 102, and glutamate 107 contribute to the ATP site. Mg(2+) contacts are provided by asparagine 199 and aspartate 213. Substrate is bound by residues asparagine 264 and 321–323 (GIV).

The protein belongs to the succinate/malate CoA ligase beta subunit family. In terms of assembly, heterotetramer of two alpha and two beta subunits. Mg(2+) is required as a cofactor.

It carries out the reaction succinate + ATP + CoA = succinyl-CoA + ADP + phosphate. The enzyme catalyses GTP + succinate + CoA = succinyl-CoA + GDP + phosphate. Its pathway is carbohydrate metabolism; tricarboxylic acid cycle; succinate from succinyl-CoA (ligase route): step 1/1. In terms of biological role, succinyl-CoA synthetase functions in the citric acid cycle (TCA), coupling the hydrolysis of succinyl-CoA to the synthesis of either ATP or GTP and thus represents the only step of substrate-level phosphorylation in the TCA. The beta subunit provides nucleotide specificity of the enzyme and binds the substrate succinate, while the binding sites for coenzyme A and phosphate are found in the alpha subunit. The sequence is that of Succinate--CoA ligase [ADP-forming] subunit beta from Yersinia enterocolitica serotype O:8 / biotype 1B (strain NCTC 13174 / 8081).